A 461-amino-acid polypeptide reads, in one-letter code: Growth/differentiation factor 7 (461 aa).

The N-terminal stretch at 1–19 is a signal peptide; that stretch reads MDLSAAAALCLWLLSACRP. A propeptide spanning residues 20-315 is cleaved from the precursor; that stretch reads RDGLEAAAVL…ANLGGRRRRR (296 aa). The N-linked (GlcNAc...) asparagine glycan is linked to Asn-79. The interval 287–360 is disordered; sequence LRAAAEPPPD…GHGRRGRSRC (74 aa). Residues 323 to 350 are compositionally biased toward gly residues; sequence GAQGSGGGGGGGGGGGGGGGGGGGGAGR. Basic residues predominate over residues 351 to 360; it reads GHGRRGRSRC. 3 disulfide bridges follow: Cys-360-Cys-426, Cys-389-Cys-458, and Cys-393-Cys-460.

The protein belongs to the TGF-beta family. Homodimer; disulfide-linked.

It localises to the secreted. This Mus musculus (Mouse) protein is Growth/differentiation factor 7 (Gdf7).